The chain runs to 312 residues: Glycerol-3-phosphate phosphatase (312 aa).

The Nucleophile role is filled by Asp30. Residues Asp30, Asp32, and Asp251 each contribute to the Mg(2+) site. Asp32 serves as the catalytic Proton donor.

The protein belongs to the HAD-like hydrolase superfamily. CbbY/CbbZ/Gph/YieH family. As to quaternary structure, homodimer. Requires Mg(2+) as cofactor.

The enzyme catalyses O-phospho-L-tyrosyl-[protein] + H2O = L-tyrosyl-[protein] + phosphate. It carries out the reaction sn-glycerol 1-phosphate + H2O = glycerol + phosphate. The catalysed reaction is sn-glycerol 3-phosphate + H2O = glycerol + phosphate. Glycerol-3-phosphate phosphatase hydrolyzing glycerol-3-phosphate into glycerol. Thereby, regulates the cellular levels of glycerol-3-phosphate a metabolic intermediate of glucose, lipid and energy metabolism. Was also shown to have a 2-phosphoglycolate phosphatase activity and a tyrosine-protein phosphatase activity. However, their physiological relevance is unclear. In vitro, also has a phosphatase activity toward ADP, ATP, GDP and GTP. The sequence is that of Glycerol-3-phosphate phosphatase from Gallus gallus (Chicken).